Reading from the N-terminus, the 366-residue chain is DNA primase large subunit PriL (366 aa).

The [4Fe-4S] cluster site is built by cysteine 227, cysteine 298, cysteine 307, and cysteine 314.

This sequence belongs to the eukaryotic-type primase large subunit family. Heterodimer of a small subunit (PriS) and a large subunit (PriL). [4Fe-4S] cluster is required as a cofactor.

In terms of biological role, regulatory subunit of DNA primase, an RNA polymerase that catalyzes the synthesis of short RNA molecules used as primers for DNA polymerase during DNA replication. Stabilizes and modulates the activity of the small subunit, increasing the rate of DNA synthesis, and conferring RNA synthesis capability. The DNA polymerase activity may enable DNA primase to also catalyze primer extension after primer synthesis. May also play a role in DNA repair. This is DNA primase large subunit PriL from Methanocella arvoryzae (strain DSM 22066 / NBRC 105507 / MRE50).